The sequence spans 460 residues: Cysteine--tRNA ligase (460 aa).

Cys-28 provides a ligand contact to Zn(2+). Residues 30-40 carry the 'HIGH' region motif; the sequence is MTVYDYCHLGH. Cys-209, His-234, and Glu-238 together coordinate Zn(2+). Positions 266 to 270 match the 'KMSKS' region motif; the sequence is KMSKS. An ATP-binding site is contributed by Lys-269.

Belongs to the class-I aminoacyl-tRNA synthetase family. As to quaternary structure, monomer. Requires Zn(2+) as cofactor.

The protein resides in the cytoplasm. The enzyme catalyses tRNA(Cys) + L-cysteine + ATP = L-cysteinyl-tRNA(Cys) + AMP + diphosphate. The polypeptide is Cysteine--tRNA ligase (Pseudomonas putida (strain W619)).